An 860-amino-acid polypeptide reads, in one-letter code: Leucine--tRNA ligase (860 aa).

The short motif at 42–52 (PYPSGRLHMGH) is the 'HIGH' region element. A 'KMSKS' region motif is present at residues 619–623 (KMSKS). Residue K622 participates in ATP binding.

Belongs to the class-I aminoacyl-tRNA synthetase family.

Its subcellular location is the cytoplasm. The enzyme catalyses tRNA(Leu) + L-leucine + ATP = L-leucyl-tRNA(Leu) + AMP + diphosphate. This Erwinia tasmaniensis (strain DSM 17950 / CFBP 7177 / CIP 109463 / NCPPB 4357 / Et1/99) protein is Leucine--tRNA ligase.